Reading from the N-terminus, the 600-residue chain is Ligand-dependent nuclear receptor corepressor-like protein (600 aa).

3 disordered regions span residues 1–24 (MEKG…QCRS), 102–122 (SVIG…GQSN), and 495–519 (DGTS…KRGR). The segment covering 104–122 (IGSSQSTPTEELSSQGQSN) has biased composition (polar residues). Residues 514–566 (RKKRGRYRQYDHEIMEEAIAMVMSGKMSVSKAQGIYGVPHSTLEYKVKERSGT) enclose the HTH psq-type domain. A DNA-binding region (H-T-H motif) is located at residues 542–562 (VSKAQGIYGVPHSTLEYKVKE). Residues 581-600 (GLFNMTDSGTGSCKTSSKPV) are disordered. Over residues 583–600 (FNMTDSGTGSCKTSSKPV) the composition is skewed to polar residues.

The protein localises to the nucleus. Its function is as follows. May act as transcription activator that binds DNA elements with the sequence 5'-CCCTATCGATCGATCTCTACCT-3'. This Gallus gallus (Chicken) protein is Ligand-dependent nuclear receptor corepressor-like protein (LCORL).